The chain runs to 197 residues: dTTP/UTP pyrophosphatase (197 aa).

Residue aspartate 70 is the Proton acceptor of the active site.

It belongs to the Maf family. YhdE subfamily. A divalent metal cation is required as a cofactor.

It is found in the cytoplasm. The catalysed reaction is dTTP + H2O = dTMP + diphosphate + H(+). It catalyses the reaction UTP + H2O = UMP + diphosphate + H(+). In terms of biological role, nucleoside triphosphate pyrophosphatase that hydrolyzes dTTP and UTP. May have a dual role in cell division arrest and in preventing the incorporation of modified nucleotides into cellular nucleic acids. The sequence is that of dTTP/UTP pyrophosphatase from Yersinia pestis bv. Antiqua (strain Antiqua).